A 492-amino-acid chain; its full sequence is Excitatory amino acid transporter (492 aa).

Residues 1–7 lie on the Cytoplasmic side of the membrane; sequence MVSWIRK. The next 3 membrane-spanning stretches (helical) occupy residues 8 to 28, 47 to 67, and 85 to 105; these read NLLLVLTVSSVVLGALCGFLL, LLMHMLKMMILPLIMSSLISG, and TYYMFTTAVAVVTGIFLVLVI. The Extracellular segment spans residues 106 to 191; the sequence is HPGDPTIKKE…VKASVEYTSG (86 aa). Residues asparagine 166 and asparagine 176 are each glycosylated (N-linked (GlcNAc...) asparagine). The next 5 helical transmembrane spans lie at 192-212, 228-248, 270-290, 358-378, and 389-409; these read MNVLGVIVFCIAIGISLSQLG, VIMKLVMTVMWYSPFGILCLI, VTVLSGLAIHSLISLPLIFFV, AVAAIFIAQINGVHLSFGQVV, and IGAASVPSAGLVTMLLVLTAV.

It belongs to the dicarboxylate/amino acid:cation symporter (DAACS) (TC 2.A.23) family.

The protein resides in the membrane. Transports L-glutamate and also L- and D-aspartate. Essential for terminating the postsynaptic action of glutamate by rapidly removing released glutamate from the synaptic cleft. Acts as a symport by cotransporting sodium. In Onchocerca volvulus, this protein is Excitatory amino acid transporter (GLT-1).